The following is a 382-amino-acid chain: Saccharopine dehydrogenase [NAD(+), L-lysine-forming] (382 aa).

The L-saccharopine site is built by R20 and K79. K79 serves as the catalytic Proton acceptor. The active-site Proton donor is the H98. Q103 provides a ligand contact to L-saccharopine. R132 contributes to the NAD(+) binding site. The L-saccharopine site is built by R133 and F137. NAD(+) contacts are provided by residues 215–216 (GR), D239, T243, Y263, and V290. A disulfide bridge connects residues C217 and C261. An L-saccharopine-binding site is contributed by 291–293 (SAD). An NAD(+)-binding site is contributed by 330 to 333 (IDHL).

This sequence belongs to the AlaDH/PNT family. As to quaternary structure, monomer.

It carries out the reaction L-saccharopine + NAD(+) + H2O = L-lysine + 2-oxoglutarate + NADH + H(+). It participates in amino-acid biosynthesis; L-lysine biosynthesis via AAA pathway; L-lysine from L-alpha-aminoadipate (fungal route): step 3/3. Catalyzes the NAD(+)-dependent cleavage of saccharopine to L-lysine and 2-oxoglutarate, the final step in the alpha-aminoadipate (AAA) pathway for lysin biosynthesis. The sequence is that of Saccharopine dehydrogenase [NAD(+), L-lysine-forming] from Candida albicans (strain SC5314 / ATCC MYA-2876) (Yeast).